The following is a 313-amino-acid chain: MGNELQHRTVLLDEAVESLVTRPDGIYVDGTFGRGGHSRAVLARLAEAGRLIAFDKDPRAIETAQRIEDARFSIVHDSFASMRDALAARGIEKVSGVLLDLGVSSPQVDDPARGFSFRADGPLDMRMDPTRGESAAEWLARASVQELTEVIRDYGEERFAFQIAKALVARRAESDRLGPLDTTGELAQIVGHVVKTREKGKDPATRTFQAIRIHVNQELADLQVVLDAALSLLEQGGRLVVISFHSLEDRIVKRFMQAHASAPAVDRRLPIRAVDLPSPPLKIISRQFPSEAEVVANPRARSAVMRIAERVTP.

Residues 35–37, D55, F79, D100, and Q107 each bind S-adenosyl-L-methionine; that span reads GGH.

This sequence belongs to the methyltransferase superfamily. RsmH family.

It localises to the cytoplasm. The catalysed reaction is cytidine(1402) in 16S rRNA + S-adenosyl-L-methionine = N(4)-methylcytidine(1402) in 16S rRNA + S-adenosyl-L-homocysteine + H(+). Specifically methylates the N4 position of cytidine in position 1402 (C1402) of 16S rRNA. This chain is Ribosomal RNA small subunit methyltransferase H, found in Burkholderia ambifaria (strain MC40-6).